The sequence spans 271 residues: Putative carboxymethylenebutenolidase (271 aa).

Catalysis depends on residues Cys147, Asp204, and His236.

This sequence belongs to the dienelactone hydrolase family.

The catalysed reaction is 2-(5-oxo-2,5-dihydrofuran-2-ylidene)acetate + H2O = 4-oxohex-2-enedioate + H(+). This Escherichia coli O157:H7 protein is Putative carboxymethylenebutenolidase (ysgA).